A 489-amino-acid chain; its full sequence is UDP-N-acetylmuramoyl-L-alanyl-D-glutamate--2,6-diaminopimelate ligase (489 aa).

Position 30 (Ser30) interacts with UDP-N-acetyl-alpha-D-muramoyl-L-alanyl-D-glutamate. 113–119 lines the ATP pocket; it reads GTNGKTS. Residues 155 to 156, Ser182, Gln188, and Arg190 each bind UDP-N-acetyl-alpha-D-muramoyl-L-alanyl-D-glutamate; that span reads TT. At Lys222 the chain carries N6-carboxylysine. Residues Arg388, 412 to 415, Gly463, and Glu467 each bind meso-2,6-diaminopimelate; that span reads DNPR. The Meso-diaminopimelate recognition motif signature appears at 412 to 415; that stretch reads DNPR.

Belongs to the MurCDEF family. MurE subfamily. Mg(2+) is required as a cofactor. Carboxylation is probably crucial for Mg(2+) binding and, consequently, for the gamma-phosphate positioning of ATP.

It is found in the cytoplasm. The enzyme catalyses UDP-N-acetyl-alpha-D-muramoyl-L-alanyl-D-glutamate + meso-2,6-diaminopimelate + ATP = UDP-N-acetyl-alpha-D-muramoyl-L-alanyl-gamma-D-glutamyl-meso-2,6-diaminopimelate + ADP + phosphate + H(+). It functions in the pathway cell wall biogenesis; peptidoglycan biosynthesis. Functionally, catalyzes the addition of meso-diaminopimelic acid to the nucleotide precursor UDP-N-acetylmuramoyl-L-alanyl-D-glutamate (UMAG) in the biosynthesis of bacterial cell-wall peptidoglycan. The polypeptide is UDP-N-acetylmuramoyl-L-alanyl-D-glutamate--2,6-diaminopimelate ligase (Coxiella burnetii (strain RSA 493 / Nine Mile phase I)).